The primary structure comprises 136 residues: uncharacterized protein (136 aa).

This is an uncharacterized protein from Frog virus 3 (isolate Goorha) (FV-3).